The following is a 385-amino-acid chain: Methylthioribose-1-phosphate isomerase (385 aa).

Residue D255 is the Proton donor of the active site.

It belongs to the eIF-2B alpha/beta/delta subunits family. MtnA subfamily.

The protein resides in the cytoplasm. It is found in the nucleus. It catalyses the reaction 5-(methylsulfanyl)-alpha-D-ribose 1-phosphate = 5-(methylsulfanyl)-D-ribulose 1-phosphate. It functions in the pathway amino-acid biosynthesis; L-methionine biosynthesis via salvage pathway; L-methionine from S-methyl-5-thio-alpha-D-ribose 1-phosphate: step 1/6. In terms of biological role, catalyzes the interconversion of methylthioribose-1-phosphate (MTR-1-P) into methylthioribulose-1-phosphate (MTRu-1-P). The chain is Methylthioribose-1-phosphate isomerase (mri1) from Aspergillus clavatus (strain ATCC 1007 / CBS 513.65 / DSM 816 / NCTC 3887 / NRRL 1 / QM 1276 / 107).